A 1848-amino-acid polypeptide reads, in one-letter code: Histone-lysine N-methyltransferase, H3 lysine-79 specific (1848 aa).

In terms of domain architecture, DOT1 spans 19-336 (DVISFAWPLQ…ILERYFQRLK (318 aa)). S-adenosyl-L-methionine-binding positions include 142-145 (YGET), 165-174 (FIDLGSGVGQ), Glu192, and 228-229 (DF). Disordered stretches follow at residues 338 to 537 (KGGN…TRKA), 558 to 593 (AVSVPSKESSSKEDPPRAASAGPGRKGRMKKGARGR), 886 to 908 (LNSVKNSRRNREHRARSQEWPEV), 960 to 996 (PPPATAPVSIKSSPGHHYKDTTLMPAPKQQQQQQMTL), 1033 to 1075 (LNED…AQSL), 1165 to 1190 (HMASLYPAGQQTTPADLGYQRRRSSV), 1221 to 1333 (QRQQ…TQVS), 1345 to 1374 (QEKLSQHVTPQATPPLPGHGGAPTSGKTIG), 1432 to 1463 (VHVRPLSEESQDPQPTSYAQERGPGLGAGGAA), 1486 to 1508 (ARANAGTAPPATHSSSARSGRDY), 1529 to 1559 (EQQQKQSKGAGSAGSSSLRGPRLNGANPPLE), 1573 to 1604 (KYKEETEERQRRAAAAASSSAGPPAGMELPTH), 1637 to 1713 (SPLA…VDPP), and 1731 to 1757 (QLSHHQQQQQQMLHHHQSQQQQHLQLT). Residues 339–360 (GGNDHESVGTVRTTRDRAKREA) show a composition bias toward basic and acidic residues. Residues 364 to 373 (QHHHNNHHSN) show a composition bias toward basic residues. The segment covering 391-405 (ATATAAHQQRHQSQS) has biased composition (low complexity). The segment covering 419–428 (SGQQAASKTR) has biased composition (polar residues). Composition is skewed to low complexity over residues 429–439 (QQLQHQHNQQQ) and 453–474 (DATNGNGGNTTTATNTTSASNG). Phosphoserine is present on residues Ser491, Ser492, and Ser494. Over residues 507 to 518 (GSNGGSIGGGSV) the composition is skewed to gly residues. Composition is skewed to basic residues over residues 526-535 (TQKKRKKLTR) and 582-593 (RKGRMKKGARGR). Low complexity predominate over residues 1221-1235 (QRQQMRVEEQQQQQQ). Residues 1236 to 1263 (HQHHHHHHHHHPQHRLPQHVQHQHPHQH) show a composition bias toward basic residues. The span at 1289 to 1300 (EPPQTQPLELLP) shows a compositional bias: low complexity. 3 positions are modified to phosphoserine: Ser1318, Ser1324, and Ser1325. Residues 1532-1545 (QKQSKGAGSAGSSS) are compositionally biased toward low complexity. Basic and acidic residues predominate over residues 1574 to 1583 (YKEETEERQR). 2 stretches are compositionally biased toward low complexity: residues 1585–1598 (AAAAASSSAGPPAG) and 1681–1696 (HDATTPSPTPSSSSSS). A compositionally biased stretch (polar residues) spans 1697 to 1706 (CGRRSNSNNG).

It belongs to the class I-like SAM-binding methyltransferase superfamily. DOT1 family. Broadly expressed in most tissues. Expressed in a large subset of neurons and in a small subset of glial cells.

It localises to the nucleus. It catalyses the reaction L-lysyl(79)-[histone H3] + 3 S-adenosyl-L-methionine = N(6),N(6),N(6)-trimethyl-L-lysyl(79)-[histone H3] + 3 S-adenosyl-L-homocysteine + 3 H(+). Its function is as follows. Histone methyltransferase. Methylates 'Lys-79' of histone H3. Required for Polycomb Group (PcG) and trithorax Group (trxG) maintenance of expression. Also involved in telomeric silencing but do not in centric heterochromatin. Probably participates in pairing sensitivity. The polypeptide is Histone-lysine N-methyltransferase, H3 lysine-79 specific (gpp) (Drosophila melanogaster (Fruit fly)).